A 207-amino-acid chain; its full sequence is Large ribosomal subunit protein uL4 (207 aa).

The interval 44-76 is disordered; it reads RRQGTQSTKTKSEVRGGGKKPWRQKGTGRARQG. Residues 60 to 71 show a composition bias toward basic residues; that stretch reads GGKKPWRQKGTG.

Belongs to the universal ribosomal protein uL4 family. In terms of assembly, part of the 50S ribosomal subunit.

In terms of biological role, one of the primary rRNA binding proteins, this protein initially binds near the 5'-end of the 23S rRNA. It is important during the early stages of 50S assembly. It makes multiple contacts with different domains of the 23S rRNA in the assembled 50S subunit and ribosome. Forms part of the polypeptide exit tunnel. The protein is Large ribosomal subunit protein uL4 of Ruminiclostridium cellulolyticum (strain ATCC 35319 / DSM 5812 / JCM 6584 / H10) (Clostridium cellulolyticum).